The following is a 226-amino-acid chain: 3-dehydroquinate dehydratase (226 aa).

Residues 29 to 31 (EFR) and arginine 56 each bind 3-dehydroquinate. The Proton donor/acceptor role is filled by histidine 120. The active-site Schiff-base intermediate with substrate is the lysine 146. Arginine 187, threonine 208, and glutamine 212 together coordinate 3-dehydroquinate.

The protein belongs to the type-I 3-dehydroquinase family. As to quaternary structure, homodimer.

It carries out the reaction 3-dehydroquinate = 3-dehydroshikimate + H2O. The protein operates within metabolic intermediate biosynthesis; chorismate biosynthesis; chorismate from D-erythrose 4-phosphate and phosphoenolpyruvate: step 3/7. Functionally, involved in the third step of the chorismate pathway, which leads to the biosynthesis of aromatic amino acids. Catalyzes the cis-dehydration of 3-dehydroquinate (DHQ) and introduces the first double bond of the aromatic ring to yield 3-dehydroshikimate. The protein is 3-dehydroquinate dehydratase of Halobacterium salinarum (strain ATCC 700922 / JCM 11081 / NRC-1) (Halobacterium halobium).